The chain runs to 377 residues: Odorant receptor 30a (377 aa).

The Cytoplasmic segment spans residues M1–R34. The helical transmembrane segment at Y35–S55 threads the bilayer. Topologically, residues T56–N65 are extracellular. Residues V66–R86 traverse the membrane as a helical segment. Residues F87–R127 are Cytoplasmic-facing. Residues I128–S148 form a helical membrane-spanning segment. Residues E149–E172 lie on the Extracellular side of the membrane. A helical transmembrane segment spans residues I173–T193. The Cytoplasmic segment spans residues N194–H254. A helical transmembrane segment spans residues L255–A275. Over Q276–Q280 the chain is Extracellular. A helical transmembrane segment spans residues T281–V301. Topologically, residues A302 to A344 are cytoplasmic. A helical transmembrane segment spans residues I345–I365. Over Y366–G377 the chain is Extracellular.

It belongs to the insect chemoreceptor superfamily. Heteromeric odorant receptor channel (TC 1.A.69) family. Or30a subfamily. In terms of assembly, interacts with Orco. Complexes exist early in the endomembrane system in olfactory sensory neurons (OSNs), coupling these complexes to the conserved ciliary trafficking pathway.

The protein localises to the cell membrane. Its function is as follows. Odorant receptor which mediates acceptance or avoidance behavior, depending on its substrates. The odorant receptor repertoire encodes a large collection of odor stimuli that vary widely in identity, intensity, and duration. May form a complex with Orco to form odorant-sensing units, providing sensitive and prolonged odorant signaling and calcium permeability. Involved in the behavioral responses to propyl acetate and anisole. The chain is Odorant receptor 30a (Or30a) from Drosophila melanogaster (Fruit fly).